Here is a 320-residue protein sequence, read N- to C-terminus: Protoheme IX farnesyltransferase (320 aa).

The next 9 membrane-spanning stretches (helical) occupy residues 38 to 58 (VIELLLVSTLPTMIFAQRGFP), 60 to 80 (IGLILATLVGGAFAAGSAGVF), 109 to 129 (EALVFAWILGAASIAILWFGA), 132 to 152 (LSAWLGLGAIVFYVVIYTMIL), 159 to 179 (NIVWGGAAGCFPVLIAWAAVT), 184 to 204 (WPAIVLFMVIFLWTPPHYWPL), 222 to 242 (AIAGAKVVSVQVVLYAWAMVA), 254 to 276 (GWVYTIAAVAAGAWFLYESHALY), and 299 to 319 (YLTLLFIALAVDPFVGSAIVG).

Belongs to the UbiA prenyltransferase family. Protoheme IX farnesyltransferase subfamily.

Its subcellular location is the cell membrane. It catalyses the reaction heme b + (2E,6E)-farnesyl diphosphate + H2O = Fe(II)-heme o + diphosphate. It participates in porphyrin-containing compound metabolism; heme O biosynthesis; heme O from protoheme: step 1/1. Functionally, converts heme B (protoheme IX) to heme O by substitution of the vinyl group on carbon 2 of heme B porphyrin ring with a hydroxyethyl farnesyl side group. This is Protoheme IX farnesyltransferase from Paenarthrobacter aurescens (strain TC1).